The following is a 115-amino-acid chain: NADH-ubiquinone oxidoreductase chain 3 (115 aa).

3 consecutive transmembrane segments (helical) span residues 4-24 (LTAL…AFWL), 55-75 (FFLV…LLPL), and 83-103 (YINI…LGLA).

Belongs to the complex I subunit 3 family. Core subunit of respiratory chain NADH dehydrogenase (Complex I) which is composed of 45 different subunits. Interacts with TMEM186. Interacts with TMEM242.

Its subcellular location is the mitochondrion inner membrane. The enzyme catalyses a ubiquinone + NADH + 5 H(+)(in) = a ubiquinol + NAD(+) + 4 H(+)(out). Its function is as follows. Core subunit of the mitochondrial membrane respiratory chain NADH dehydrogenase (Complex I) which catalyzes electron transfer from NADH through the respiratory chain, using ubiquinone as an electron acceptor. Essential for the catalytic activity of complex I. This is NADH-ubiquinone oxidoreductase chain 3 from Peromyscus polionotus (Oldfield mouse).